The sequence spans 717 residues: DNA ligase (717 aa).

Residues 44 to 48 (DAEYD), 93 to 94 (SL), and E127 contribute to the NAD(+) site. K129 acts as the N6-AMP-lysine intermediate in catalysis. Residues R150, E186, K302, and K326 each coordinate NAD(+). C431, C434, C455, and C461 together coordinate Zn(2+). The 79-residue stretch at 639-717 (TSGSPVVGKT…EDEWLELIGG (79 aa)) folds into the BRCT domain.

Belongs to the NAD-dependent DNA ligase family. LigA subfamily. Requires Mg(2+) as cofactor. Mn(2+) is required as a cofactor.

It carries out the reaction NAD(+) + (deoxyribonucleotide)n-3'-hydroxyl + 5'-phospho-(deoxyribonucleotide)m = (deoxyribonucleotide)n+m + AMP + beta-nicotinamide D-nucleotide.. DNA ligase that catalyzes the formation of phosphodiester linkages between 5'-phosphoryl and 3'-hydroxyl groups in double-stranded DNA using NAD as a coenzyme and as the energy source for the reaction. It is essential for DNA replication and repair of damaged DNA. This Rhizobium rhizogenes (strain K84 / ATCC BAA-868) (Agrobacterium radiobacter) protein is DNA ligase.